Reading from the N-terminus, the 217-residue chain is Probable transaldolase (217 aa).

Residue K83 is the Schiff-base intermediate with substrate of the active site.

This sequence belongs to the transaldolase family. Type 3B subfamily.

The protein resides in the cytoplasm. The enzyme catalyses D-sedoheptulose 7-phosphate + D-glyceraldehyde 3-phosphate = D-erythrose 4-phosphate + beta-D-fructose 6-phosphate. Its pathway is carbohydrate degradation; pentose phosphate pathway; D-glyceraldehyde 3-phosphate and beta-D-fructose 6-phosphate from D-ribose 5-phosphate and D-xylulose 5-phosphate (non-oxidative stage): step 2/3. Transaldolase is important for the balance of metabolites in the pentose-phosphate pathway. The protein is Probable transaldolase of Novosphingobium aromaticivorans (strain ATCC 700278 / DSM 12444 / CCUG 56034 / CIP 105152 / NBRC 16084 / F199).